Here is a 34-residue protein sequence, read N- to C-terminus: Calcitonin-like peptide 1 (34 aa).

Cysteines 2 and 7 form a disulfide. P34 carries the proline amide modification.

This Odorrana schmackeri (Schmacker's frog) protein is Calcitonin-like peptide 1.